The chain runs to 121 residues: Basic phospholipase A2 homolog zhaoermiatoxin (121 aa).

7 cysteine pairs are disulfide-bonded: cysteine 26–cysteine 115, cysteine 28–cysteine 44, cysteine 43–cysteine 95, cysteine 49–cysteine 121, cysteine 50–cysteine 88, cysteine 57–cysteine 81, and cysteine 75–cysteine 86.

Belongs to the phospholipase A2 family. Group II subfamily. R49 sub-subfamily. As to quaternary structure, homodimer. As to expression, expressed by the venom gland.

The protein resides in the secreted. Snake venom phospholipase A2 homolog that induces myonecrosis, and edema. Has low myotoxic activity. The chain is Basic phospholipase A2 homolog zhaoermiatoxin from Protobothrops mangshanensis (Mangshan pitviper).